A 115-amino-acid chain; its full sequence is Replication initiation control protein YabA (115 aa).

Zn(2+) is bound by residues H85, C87, C101, and C104.

The protein belongs to the YabA family. Homotetramer. Interacts with both DnaA and DnaN, acting as a bridge between these two proteins. The cofactor is Zn(2+).

It localises to the cytoplasm. Its subcellular location is the nucleoid. In terms of biological role, involved in control of chromosome replication initiation. Inhibits the cooperative binding of DnaA to the oriC region, thus negatively regulating initiation of chromosome replication. Inhibits the ability of DnaA-ATP to form a helix on DNA; does not disassemble preformed DnaA-DNA helices. Decreases the residence time of DnaA on the chromosome at its binding sites (oriC, replication forks and promoter-binding sites). Tethers DnaA to the replication machinery via the DNA polymerase beta sliding clamp subunit (dnaN). Associates with oriC and other DnaA targets on the chromosome in a DnaA-dependent manner. The polypeptide is Replication initiation control protein YabA (Lactiplantibacillus plantarum (strain ATCC BAA-793 / NCIMB 8826 / WCFS1) (Lactobacillus plantarum)).